We begin with the raw amino-acid sequence, 323 residues long: Tyrosine recombinase XerD (323 aa).

The 86-residue stretch at 21-106 (AEDDQAIQRF…TLRGFYALCL (86 aa)) folds into the Core-binding (CB) domain. A Tyr recombinase domain is found at 127–317 (SLPKALTESQ…ARQHLQTLHA (191 aa)). Residues Arg167, Lys191, His269, Arg272, and His295 contribute to the active site. The active-site O-(3'-phospho-DNA)-tyrosine intermediate is the Tyr304.

It belongs to the 'phage' integrase family. XerD subfamily. In terms of assembly, forms a cyclic heterotetrameric complex composed of two molecules of XerC and two molecules of XerD.

Its subcellular location is the cytoplasm. In terms of biological role, site-specific tyrosine recombinase, which acts by catalyzing the cutting and rejoining of the recombining DNA molecules. The XerC-XerD complex is essential to convert dimers of the bacterial chromosome into monomers to permit their segregation at cell division. It also contributes to the segregational stability of plasmids. The polypeptide is Tyrosine recombinase XerD (Xanthomonas campestris pv. campestris (strain ATCC 33913 / DSM 3586 / NCPPB 528 / LMG 568 / P 25)).